We begin with the raw amino-acid sequence, 655 residues long: MLPNFAVLPPEVNSARVFAGAGSAPMLAAAAAWDDLASELHCAAMSFGSVTSGLVVGWWQGSASAAMVDAAASYIGWLSTSAAHAEGAAGLARAAVSVFEEALAATVHPAMVAANRAQVASLVASNLFGQNAPAIAALESLYECMWAQDAAAMAGYYVGASAVATQLASWLQRLQSIPGAASLDARLPSSAEAPMGVVRAVNSAIAANAAAAQTVGLVMGGSGTPIPSARYVELANALYMSGSVPGVIAQALFTPQGLYPVVVIKNLTFDSSVAQGAVILESAIRQQIAAGNNVTVFGYSQSATISSLVMANLAASADPPSPDELSFTLIGNPNNPNGGVATRFPGISFPSLGVTATGATPHNLYPTKIYTIEYDGVADFPRYPLNFVSTLNAIAGTYYVHSNYFILTPEQIDAAVPLTNTVGPTMTQYYIIRTENLPLLEPLRSVPIVGNPLANLVQPNLKVIVNLGYGDPAYGYSTSPPNVATPFGLFPEVSPVVIADALVAGTQQGIGDFAYDVSHLELPLPADGSTMPSTAPGSGTPVPPLSIDSLIDDLQVANRNLANTISKVAATSYATVLPTADIANAALTIVPSYNIHLFLEGIQQALKGDPMGLVNAVGYPLAADVALFTAAGGLQLLIIISAGRTIANDISAIVP.

Residues 245-469 (PGVIAQALFT…NLKVIVNLGY (225 aa)) form the PE-PPE domain.

It belongs to the mycobacterial PPE family.

This is an uncharacterized protein from Mycobacterium tuberculosis (strain ATCC 25618 / H37Rv).